Consider the following 783-residue polypeptide: Glucosidase YgjK (783 aa).

The first 22 residues, 1–22 (MKIKTILTPVTCALLISFSAHA), serve as a signal peptide directing secretion. The tract at residues 24 to 254 (NADNYKNVIN…TTLYTTYSHL (231 aa)) is N-terminal domain. The tract at residues 254-299 (LLTAQEVSKEQMQIRDILARPAFYLTASQQRWEEYLKKGLTNPDAT) is linker. The interval 300–783 (PEQTRVAVKA…MLYNDFFRKQ (484 aa)) is a domain. The Ca(2+) site is built by D454, N456, N458, V460, and E462. D524 serves as the catalytic Proton donor. E572 lines the Ca(2+) pocket. E750 serves as the catalytic Proton acceptor.

It belongs to the glycosyl hydrolase 63 family.

Functionally, glucoside hydrolase that cleaves the alpha-1,3-glucosidic linkage in nigerose. Has very low activity towards maltooligosaccharides, soluble starch, nigerotriose, kojibiose and trehalose. The protein is Glucosidase YgjK (ygjK) of Escherichia coli (strain K12).